Here is a 563-residue protein sequence, read N- to C-terminus: Tripeptidyl-peptidase 1 (563 aa).

The first 19 residues, 1–19 (MGLQACLLGLFALILSGKC), serve as a signal peptide directing secretion. Residues 20 to 195 (SYSPEPDQRR…PEPQVTGTVG (176 aa)) constitute a propeptide, removed in mature form. C111 and C122 form a disulfide bridge. The Peptidase S53 domain maps to 199-563 (GVTPSVIRKR…PALLKTLLNP (365 aa)). N-linked (GlcNAc...) asparagine glycans are attached at residues N210 and N222. Active-site charge relay system residues include E272 and D276. N-linked (GlcNAc...) asparagine glycosylation is found at N286, N313, and N443. 2 disulfide bridges follow: C365-C526 and C522-C537. Catalysis depends on S475, which acts as the Charge relay system. The Ca(2+) site is built by D517 and V518. 3 residues coordinate Ca(2+): G539, G541, and D543.

Monomer. Interacts with CLN5. Interacts with CLN3. Ca(2+) is required as a cofactor. In terms of processing, activated by autocatalytic proteolytical processing upon acidification. N-glycosylation is required for processing and activity.

Its subcellular location is the lysosome. The protein localises to the melanosome. The catalysed reaction is Release of an N-terminal tripeptide from a polypeptide, but also has endopeptidase activity.. Lysosomal serine protease with tripeptidyl-peptidase I activity. May act as a non-specific lysosomal peptidase which generates tripeptides from the breakdown products produced by lysosomal proteinases. Requires substrates with an unsubstituted N-terminus. This is Tripeptidyl-peptidase 1 (TPP1) from Pan troglodytes (Chimpanzee).